A 778-amino-acid polypeptide reads, in one-letter code: DNA repair protein crb2 (778 aa).

The segment at 35–56 (KVNASINPSPPRSNDNSNKEFS) is disordered. Threonine 73 bears the Phosphothreonine; by ATM mark. Serine 80 is modified (phosphoserine; by ATM). Residues 141–245 (VSNSSQILSP…PPAFLPETSE (105 aa)) form an interaction with rad4 region. Threonine 187 carries the post-translational modification Phosphothreonine. Threonine 215 carries the post-translational modification Phosphothreonine; by cdc2. The residue at position 235 (threonine 235) is a Phosphothreonine. Residues 358–493 (SRRSFKNRVL…RRFQGRDLSF (136 aa)) are tudor-like. Residues 370-404 (FKGYPSFYYPATLVAPVHSAVTSSIMYKVQFDDAT) form an interaction with dimethylated histone H4 region. Residues 535 to 653 (SNQLIFDDCV…RVVDFSPYLL (119 aa)) form the BRCT domain.

In terms of assembly, homodimer. Dimerization is mediated via the BRCT domain. Interacts (via BRCT domain) with rad3. Interacts with rad4 (via BRCT1,2 domains); a single rad4 molecule interacts simultaneously with both Thr-187 phosphorylation sites in a crb2 dimer. Interacts (via Tudor domain) with histone H4K20me2. Interacts (via BRCT dmain) with histone H2AS128ph (gamma-H2A). Interacts with chk1. Interacts with sad1. In terms of processing, phosphorylation of Thr-73 and Ser-80 by rad3/ATM promotes interaction with chk1. Phosphorylation at Thr-187 is dependent on phosphorylation at Thr-215 and Thr-235. Phosphorylation at Thr-215 and Thr-235 may prime the non-canonical Thr-187 site for cdc2/CDK phosphorylation.

It is found in the nucleus. Functionally, essential for cell cycle arrest at the G1 and G2 stages following DNA damage by X-, and UV-irradiation, or inactivation of DNA ligase. Plays a role in the response to DNA damage. Interaction with rad4 via its phosphorylation sites in the N-terminus couples the DNA checkpoint apparatus to chromatin via interaction of its C-terminal BRCT domains with epigenetic modifications on histones H4 and H2A, respectively, in the G1/S phase of the cell cycle, and facilitates recruitment of the checkpoint kinase chk1. The chain is DNA repair protein crb2 from Schizosaccharomyces pombe (strain 972 / ATCC 24843) (Fission yeast).